Here is a 184-residue protein sequence, read N- to C-terminus: ATP synthase subunit b, chloroplastic (184 aa).

A helical membrane pass occupies residues 27-49 (LATNLINLSVVLGVLIFFGKGVL).

It belongs to the ATPase B chain family. F-type ATPases have 2 components, F(1) - the catalytic core - and F(0) - the membrane proton channel. F(1) has five subunits: alpha(3), beta(3), gamma(1), delta(1), epsilon(1). F(0) has four main subunits: a(1), b(1), b'(1) and c(10-14). The alpha and beta chains form an alternating ring which encloses part of the gamma chain. F(1) is attached to F(0) by a central stalk formed by the gamma and epsilon chains, while a peripheral stalk is formed by the delta, b and b' chains.

It is found in the plastid. It localises to the chloroplast thylakoid membrane. Functionally, f(1)F(0) ATP synthase produces ATP from ADP in the presence of a proton or sodium gradient. F-type ATPases consist of two structural domains, F(1) containing the extramembraneous catalytic core and F(0) containing the membrane proton channel, linked together by a central stalk and a peripheral stalk. During catalysis, ATP synthesis in the catalytic domain of F(1) is coupled via a rotary mechanism of the central stalk subunits to proton translocation. Component of the F(0) channel, it forms part of the peripheral stalk, linking F(1) to F(0). The sequence is that of ATP synthase subunit b, chloroplastic from Lactuca sativa (Garden lettuce).